Reading from the N-terminus, the 147-residue chain is uncharacterized protein (147 aa).

This is an uncharacterized protein from Human cytomegalovirus (strain AD169) (HHV-5).